The sequence spans 129 residues: Follitropin subunit beta (129 aa).

The signal sequence occupies residues 1-18 (MKSIQFCFFFCCWKAICC). Cystine bridges form between cysteine 21–cysteine 69, cysteine 35–cysteine 84, cysteine 38–cysteine 122, cysteine 46–cysteine 100, cysteine 50–cysteine 102, and cysteine 105–cysteine 112. Residues asparagine 25 and asparagine 42 are each glycosylated (N-linked (GlcNAc...) asparagine).

Belongs to the glycoprotein hormones subunit beta family. As to quaternary structure, heterodimer. The active follitropin is a heterodimer composed of an alpha chain/CGA shared with other hormones and a unique beta chain/FSHB shown here.

The protein localises to the secreted. In terms of biological role, together with the alpha chain CGA constitutes follitropin, the follicle-stimulating hormone, and provides its biological specificity to the hormone heterodimer. Binds FSHR, a G protein-coupled receptor, on target cells to activate downstream signaling pathways. Follitropin is involved in follicle development and spermatogenesis in reproductive organs. The protein is Follitropin subunit beta (FSHB) of Cavia porcellus (Guinea pig).